Reading from the N-terminus, the 154-residue chain is Crossover junction endodeoxyribonuclease RuvC (154 aa).

Catalysis depends on residues aspartate 7, glutamate 67, and aspartate 139. Residues aspartate 7, glutamate 67, and aspartate 139 each coordinate Mg(2+).

Belongs to the RuvC family. In terms of assembly, homodimer which binds Holliday junction (HJ) DNA. The HJ becomes 2-fold symmetrical on binding to RuvC with unstacked arms; it has a different conformation from HJ DNA in complex with RuvA. In the full resolvosome a probable DNA-RuvA(4)-RuvB(12)-RuvC(2) complex forms which resolves the HJ. Requires Mg(2+) as cofactor.

The protein resides in the cytoplasm. It carries out the reaction Endonucleolytic cleavage at a junction such as a reciprocal single-stranded crossover between two homologous DNA duplexes (Holliday junction).. In terms of biological role, the RuvA-RuvB-RuvC complex processes Holliday junction (HJ) DNA during genetic recombination and DNA repair. Endonuclease that resolves HJ intermediates. Cleaves cruciform DNA by making single-stranded nicks across the HJ at symmetrical positions within the homologous arms, yielding a 5'-phosphate and a 3'-hydroxyl group; requires a central core of homology in the junction. The consensus cleavage sequence is 5'-(A/T)TT(C/G)-3'. Cleavage occurs on the 3'-side of the TT dinucleotide at the point of strand exchange. HJ branch migration catalyzed by RuvA-RuvB allows RuvC to scan DNA until it finds its consensus sequence, where it cleaves and resolves the cruciform DNA. The sequence is that of Crossover junction endodeoxyribonuclease RuvC from Synechococcus sp. (strain WH7803).